The primary structure comprises 420 residues: Tyrosine--tRNA ligase 2 (420 aa).

Tyrosine 34 contributes to the L-tyrosine binding site. The short motif at proline 39 to histidine 48 is the 'HIGH' region element. The L-tyrosine site is built by tyrosine 168 and glutamine 172. The 'KMSKS' region signature appears at lysine 230 to serine 234. Residue lysine 233 participates in ATP binding. In terms of domain architecture, S4 RNA-binding spans lysine 352–leucine 418.

Belongs to the class-I aminoacyl-tRNA synthetase family. TyrS type 1 subfamily. As to quaternary structure, homodimer.

It localises to the cytoplasm. It catalyses the reaction tRNA(Tyr) + L-tyrosine + ATP = L-tyrosyl-tRNA(Tyr) + AMP + diphosphate + H(+). Functionally, catalyzes the attachment of tyrosine to tRNA(Tyr) in a two-step reaction: tyrosine is first activated by ATP to form Tyr-AMP and then transferred to the acceptor end of tRNA(Tyr). This Bacillus cereus (strain ATCC 14579 / DSM 31 / CCUG 7414 / JCM 2152 / NBRC 15305 / NCIMB 9373 / NCTC 2599 / NRRL B-3711) protein is Tyrosine--tRNA ligase 2.